Here is a 31-residue protein sequence, read N- to C-terminus: Cytochrome b6-f complex subunit 6 (31 aa).

The helical transmembrane segment at 4–24 (VISYLSLLFISFLFALTLFIV) threads the bilayer.

It belongs to the PetL family. As to quaternary structure, the 4 large subunits of the cytochrome b6-f complex are cytochrome b6, subunit IV (17 kDa polypeptide, PetD), cytochrome f and the Rieske protein, while the 4 small subunits are PetG, PetL, PetM and PetN. The complex functions as a dimer.

The protein resides in the plastid. Its subcellular location is the chloroplast thylakoid membrane. Functionally, component of the cytochrome b6-f complex, which mediates electron transfer between photosystem II (PSII) and photosystem I (PSI), cyclic electron flow around PSI, and state transitions. PetL is important for photoautotrophic growth as well as for electron transfer efficiency and stability of the cytochrome b6-f complex. The sequence is that of Cytochrome b6-f complex subunit 6 from Chara vulgaris (Common stonewort).